The chain runs to 386 residues: Cytochrome b (386 aa).

Helical transmembrane passes span 32–52 (FGSLLALCLGIQIVTGVTLAM), 76–98 (WLIRYLHANTASAFFFLVYLHMG), 113–133 (TWNIGVVIFIVMIVTAFLGYV), and 179–199 (FFSLHYLLPFILAALVLMHLI). Heme b is bound by residues His-82 and His-96. Heme b is bound by residues His-183 and His-197. Residue His-202 participates in a ubiquinone binding. 4 consecutive transmembrane segments (helical) span residues 226–246 (FLFKDLVTIFLFMLGLSIFVL), 290–310 (TLGVVAMLGAILILMALPYLD), 322–342 (LSKIAFYIFIANFLVLMILGA), and 349–369 (FIIFGQISTTLYFSYFIIITP).

This sequence belongs to the cytochrome b family. As to quaternary structure, fungal cytochrome b-c1 complex contains 10 subunits; 3 respiratory subunits, 2 core proteins and 5 low-molecular weight proteins. Cytochrome b-c1 complex is a homodimer. The cofactor is heme b.

It localises to the mitochondrion inner membrane. Component of the ubiquinol-cytochrome c reductase complex (complex III or cytochrome b-c1 complex) that is part of the mitochondrial respiratory chain. The b-c1 complex mediates electron transfer from ubiquinol to cytochrome c. Contributes to the generation of a proton gradient across the mitochondrial membrane that is then used for ATP synthesis. This is Cytochrome b (COB) from Trichophyton rubrum (Athlete's foot fungus).